Reading from the N-terminus, the 255-residue chain is Hydroxylmethylpyrimidine kinase (255 aa).

3 residues coordinate pyridoxal 5'-phosphate: Gly18, Gln43, and Asn110. Gln43 provides a ligand contact to 4-amino-5-hydroxymethyl-2-methylpyrimidine. A disulfide bridge connects residues Cys195 and Cys207. Ser208 contributes to the pyridoxal 5'-phosphate binding site.

The protein belongs to the ThiD family. Homodimer. In terms of processing, crystals show a disulfide bond between Cys-195 and Cys-207. This disulfide is possibly an artifact of the purification and crystallization conditions. However, as it is adjacent to the conserved GSGC of the oxyanion hole, this disulfide may help to orient the backbone amides toward the oxanion intermediate.

It carries out the reaction 4-amino-5-hydroxymethyl-2-methylpyrimidine + ATP = 4-amino-2-methyl-5-(phosphooxymethyl)pyrimidine + ADP + H(+). It participates in cofactor biosynthesis; thiamine diphosphate biosynthesis. Inhibited by pyridoxal phosphate at high micromolar concentrations. In terms of biological role, catalyzes the phosphorylation of hydroxymethylpyrimidine (HMP) to hydroxymethylpyrimidine phosphate (HMP-P). Unlike other HMPKs, it cannot catalyze the phosphorylation of HMP-P to generate the diphosphate HMP-PP. Shows no activity with pyridoxal, pyridoxamine or pyridoxine. Does not show phosphatase activity. The polypeptide is Hydroxylmethylpyrimidine kinase (Acinetobacter baumannii (strain IS-123)).